A 66-amino-acid polypeptide reads, in one-letter code: Protein KleD (66 aa).

A DNA-binding region (H-T-H motif) is located at residues 33–52; that stretch reads VAVRSGNEWQQVTKWVEPAR.

This chain is Protein KleD (kleD), found in Escherichia coli.